Here is a 321-residue protein sequence, read N- to C-terminus: Olfactory receptor 52N4 (321 aa).

Over 1–27 the chain is Extracellular; the sequence is MLTLNKTDLIPASFILNGVPGLEDTQL. A glycan (N-linked (GlcNAc...) asparagine) is linked at asparagine 5. Residues 28–48 traverse the membrane as a helical segment; sequence WISFPFCSMYVVAMVGNCGLL. Residues 49–56 lie on the Cytoplasmic side of the membrane; it reads YLIHYEDA. Residues 57–77 form a helical membrane-spanning segment; that stretch reads LHKPMYYFLAMLSFTDLVMCS. Over 78-101 the chain is Extracellular; sequence STIPKALCIFWFHLKDIGFDECLV. Cysteine 99 and cysteine 191 are joined by a disulfide. A helical transmembrane segment spans residues 102-122; that stretch reads QMFFTHTFTGMESGVLMLMAL. The Cytoplasmic segment spans residues 123–141; it reads DRYVAICYPLRYSTILTNP. The helical transmembrane segment at 142-162 threads the bilayer; the sequence is VIAKVGTATFLRGVLLIIPFT. The Extracellular portion of the chain corresponds to 163–198; it reads FLTKLLPYCRGNILPHTYCDHMSVAKLSCGNVKVNA. A helical membrane pass occupies residues 199 to 219; it reads IYGLMVALLIWGFDILCITNS. At 220-239 the chain is on the cytoplasmic side; the sequence is YTMILRAVVSLSSADARQKA. Residues 240 to 260 traverse the membrane as a helical segment; sequence FNTCTAHICAIVFSYTPAFFS. Residues 261–276 are Extracellular-facing; the sequence is FFSHRFGEHIIPPSCH. The chain crosses the membrane as a helical span at residues 277 to 297; sequence IIVANIYLLLPPTMNPIVYGV. Residues 298 to 321 are Cytoplasmic-facing; it reads KTKQIRDCVIRILSGSKDTKSYSM.

This sequence belongs to the G-protein coupled receptor 1 family.

Its subcellular location is the cell membrane. In terms of biological role, odorant receptor. The protein is Olfactory receptor 52N4 (OR52N4) of Homo sapiens (Human).